A 93-amino-acid chain; its full sequence is Putative defensin-like protein 283 (93 aa).

Positions 1–24 are cleaved as a signal peptide; that stretch reads MTKIGFYLATYATIYIILSPGLLA. 3 cysteine pairs are disulfide-bonded: Cys43–Cys83, Cys66–Cys90, and Cys72–Cys92.

It belongs to the DEFL family.

It localises to the secreted. This chain is Putative defensin-like protein 283, found in Arabidopsis thaliana (Mouse-ear cress).